The chain runs to 141 residues: Large ribosomal subunit protein uL11 (141 aa).

The protein belongs to the universal ribosomal protein uL11 family. As to quaternary structure, part of the ribosomal stalk of the 50S ribosomal subunit. Interacts with L10 and the large rRNA to form the base of the stalk. L10 forms an elongated spine to which L12 dimers bind in a sequential fashion forming a multimeric L10(L12)X complex. In terms of processing, one or more lysine residues are methylated.

In terms of biological role, forms part of the ribosomal stalk which helps the ribosome interact with GTP-bound translation factors. The chain is Large ribosomal subunit protein uL11 from Streptococcus agalactiae serotype III (strain NEM316).